A 190-amino-acid chain; its full sequence is MNEKDNQTTSEPENEQEIIDVNDSGEQPEENETEQPQEEAVENDEIAKLQQEKDETYNRLVRLQAEFDNYKRRTLKEREADRKYKSQDLITELLPAIDNFERALQVEVTEENKSIIDGIMMVYRQLQEALTSQGVEPIKTEGEVFDPNLHHAVMQIEDENMDSNTVVEELQKGYQLKDRVIRPAMVKVNK.

A disordered region spans residues 1–42 (MNEKDNQTTSEPENEQEIIDVNDSGEQPEENETEQPQEEAVE). Residues 26 to 42 (EQPEENETEQPQEEAVE) show a composition bias toward acidic residues.

Belongs to the GrpE family. In terms of assembly, homodimer.

Its subcellular location is the cytoplasm. Its function is as follows. Participates actively in the response to hyperosmotic and heat shock by preventing the aggregation of stress-denatured proteins, in association with DnaK and GrpE. It is the nucleotide exchange factor for DnaK and may function as a thermosensor. Unfolded proteins bind initially to DnaJ; upon interaction with the DnaJ-bound protein, DnaK hydrolyzes its bound ATP, resulting in the formation of a stable complex. GrpE releases ADP from DnaK; ATP binding to DnaK triggers the release of the substrate protein, thus completing the reaction cycle. Several rounds of ATP-dependent interactions between DnaJ, DnaK and GrpE are required for fully efficient folding. The sequence is that of Protein GrpE from Oceanobacillus iheyensis (strain DSM 14371 / CIP 107618 / JCM 11309 / KCTC 3954 / HTE831).